The following is a 400-amino-acid chain: Putative F-box protein At1g30920 (400 aa).

Residues 4–49 (EENTDSIPIDLILDILSRLPSKSIARCRCVSKLWESMIRQSYFTEL) form the F-box domain.

In Arabidopsis thaliana (Mouse-ear cress), this protein is Putative F-box protein At1g30920.